A 2153-amino-acid chain; its full sequence is Genome polyprotein (2153 aa).

Residue Gly-2 is the site of N-myristoyl glycine; by host attachment. Positions 213-240 are disordered; sequence HTHPGQSGHQIRGPSQSNDRSGGKPDED. Residues 216-232 show a composition bias toward polar residues; it reads PGQSGHQIRGPSQSNDR. The amphipathic alpha-helix stretch occupies residues 565-584; that stretch reads ELQNNDDPVENFVESTLKEV. Residues His-864 and Asp-880 each act as for protease 2A activity in the active site. Zn(2+) is bound by residues Cys-897 and Cys-899. Cys-951 acts as the For protease 2A activity in catalysis. 2 residues coordinate Zn(2+): Cys-957 and His-959. The membrane-binding stretch occupies residues 1088–1158; the sequence is SDSWLRKFTE…GFSSASSEAQ (71 aa). The segment at 1088–1224 is oligomerization; that stretch reads SDSWLRKFTE…NPGCGKSLVT (137 aa). Residues 1109-1113 form an RNA-binding region; it reads SIKIG. The SF3 helicase domain maps to 1187 to 1346; it reads TKIQKDLKQL…FRNTTGLLDV (160 aa). 1214–1221 lines the ATP pocket; that stretch reads GNPGCGKS. Zn(2+) contacts are provided by Cys-1353, Cys-1365, and Cys-1370. The C4-type; degenerate zinc-finger motif lies at 1353-1370; it reads CTGCPKPAHYKTCCPLLC. An RNA-binding region spans residues 1397-1404; it reads ENATRKKV. Residues 1408 to 1413 form an oligomerization region; it reads LDAIFQ. Residues 1460-1480 lie within the membrane without spanning it; the sequence is VHYMLNCLGSLIIILGTVYAL. The residue at position 1491 (Tyr-1491) is an O-(5'-phospho-RNA)-tyrosine. In terms of domain architecture, Peptidase C3 spans 1511–1689; the sequence is GPEHEFVRAL…YGAALLRKYF (179 aa). Active-site for protease 3C activity residues include His-1550, Glu-1581, and Cys-1657. Residues 1920-2033 form the RdRp catalytic domain; the sequence is GELLAFDYTN…SYPFELDPME (114 aa). Asp-1926 and Asp-2019 together coordinate Mg(2+).

The protein belongs to the picornaviruses polyprotein family. In terms of assembly, interacts with capsid protein VP1 and capsid protein VP3 to form heterotrimeric protomers. As to quaternary structure, interacts with capsid protein VP0, and capsid protein VP3 to form heterotrimeric protomers. Five protomers subsequently associate to form pentamers which serve as building blocks for the capsid. Interacts with capsid protein VP2, capsid protein VP3 and capsid protein VP4 following cleavage of capsid protein VP0. Interacts (via C-terminus) with capsid protein VP4 (via C-terminus). Interacts with host CDHR3 (via N-terminus); this interaction occurs near each threefold vertex of the capsid and allows the virus attachment and entry into the host cell. Interacts with capsid protein VP1 and capsid protein VP3 in the mature capsid. Interacts with host CDHR3 (via N-terminus); this interaction occurs near each threefold vertex of the capsid and allows the virus attachment and entry into the host cell. In terms of assembly, interacts with capsid protein VP0 and capsid protein VP1 to form heterotrimeric protomers. Five protomers subsequently associate to form pentamers which serve as building blocks for the capsid. Interacts with capsid protein VP4 in the mature capsid. Interacts with protein 2C; this interaction may be important for virion morphogenesis. Interacts with host CDHR3 (via N-terminus); this interaction occurs near each threefold vertex of the capsid and allows the virus attachment and entry into the host cell. As to quaternary structure, interacts (via C-terminus) with capsid protein VP1 (via C-terminus). Interacts with capsid protein VP3. Homodimer. In terms of assembly, homohexamer; forms a hexameric ring structure with 6-fold symmetry characteristic of AAA+ ATPases. Interacts (via N-terminus) with host RTN3 (via reticulon domain); this interaction is important for viral replication. Interacts with capsid protein VP3; this interaction may be important for virion morphogenesis. As to quaternary structure, interacts with protein 3CD. Homodimer. Interacts with host GBF1. Interacts (via GOLD domain) with host ACBD3 (via GOLD domain); this interaction allows the formation of a viral protein 3A/ACBD3 heterotetramer with a 2:2 stoichiometry, which will stimulate the recruitment of host PI4KB in order to synthesize PI4P at the viral RNA replication sites. In terms of assembly, interacts with RNA-directed RNA polymerase. As to quaternary structure, interacts with protein 3AB and with RNA-directed RNA polymerase. Interacts with Viral protein genome-linked and with protein 3CD. It depends on Mg(2+) as a cofactor. In terms of processing, specific enzymatic cleavages in vivo by the viral proteases yield processing intermediates and the mature proteins. Post-translationally, myristoylation is required for the formation of pentamers during virus assembly. Further assembly of 12 pentamers and a molecule of genomic RNA generates the provirion. During virion maturation, immature virions are rendered infectious following cleavage of VP0 into VP4 and VP2. This maturation seems to be an autocatalytic event triggered by the presence of RNA in the capsid and it is followed by a conformational change infectious virion. In terms of processing, myristoylation is required during RNA encapsidation and formation of the mature virus particle. Post-translationally, VPg is uridylylated by the polymerase into VPg-pUpU. This acts as a nucleotide-peptide primer for the genomic RNA replication.

It is found in the virion. Its subcellular location is the host cytoplasm. It localises to the host cytoplasmic vesicle membrane. The protein localises to the host nucleus. It carries out the reaction a ribonucleoside 5'-triphosphate + H2O = a ribonucleoside 5'-diphosphate + phosphate + H(+). The enzyme catalyses Selective cleavage of Gln-|-Gly bond in the poliovirus polyprotein. In other picornavirus reactions Glu may be substituted for Gln, and Ser or Thr for Gly.. The catalysed reaction is Selective cleavage of Tyr-|-Gly bond in the picornavirus polyprotein.. It catalyses the reaction RNA(n) + a ribonucleoside 5'-triphosphate = RNA(n+1) + diphosphate. With respect to regulation, replication or transcription is subject to high level of random mutations by the nucleotide analog ribavirin. In terms of biological role, forms an icosahedral capsid of pseudo T=3 symmetry with capsid proteins VP2 and VP3. The capsid is 300 Angstroms in diameter, composed of 60 copies of each capsid protein and enclosing the viral positive strand RNA genome. Capsid protein VP1 mainly forms the vertices of the capsid. The VP1 C-termini form 60 dominant spike-like protrusions on the surface of the virion. Capsid protein VP1 interacts with host cell receptor CDHR3 to provide virion attachment to target host cells. This attachment induces virion internalization. Tyrosine kinases are probably involved in the entry process. After binding to its receptor, the capsid undergoes conformational changes. Capsid protein VP1 N-terminus (that contains an amphipathic alpha-helix) and capsid protein VP4 are externalized. Together, they shape a pore in the host membrane through which viral genome is translocated to host cell cytoplasm. Its function is as follows. Forms an icosahedral capsid of pseudo T=3 symmetry with capsid proteins VP2 and VP3. The capsid is 300 Angstroms in diameter, composed of 60 copies of each capsid protein and enclosing the viral positive strand RNA genome. Lies on the inner surface of the capsid shell. After binding to the host receptor, the capsid undergoes conformational changes. Capsid protein VP4 is released, Capsid protein VP1 N-terminus is externalized, and together, they shape a pore in the host membrane through which the viral genome is translocated into the host cell cytoplasm. Functionally, component of immature procapsids, which is cleaved into capsid proteins VP4 and VP2 after maturation. Allows the capsid to remain inactive before the maturation step. In terms of biological role, cysteine protease that cleaves viral polyprotein and specific host proteins. It is responsible for the autocatalytic cleavage between the P1 and P2 regions, which is the first cleavage occurring in the polyprotein. Also cleaves the host translation initiation factor EIF4G1, in order to shut down the capped cellular mRNA translation. Inhibits the host nucleus-cytoplasm protein and RNA trafficking by cleaving host members of the nuclear pores. Counteracts stress granule formation probably by antagonizing its assembly or promoting its dissassembly. Its function is as follows. Plays an essential role in the virus replication cycle by acting as a viroporin. Creates a pore in the host endoplasmic reticulum and as a consequence releases Ca2+ in the cytoplasm of infected cell. In turn, high levels of cytoplasmic calcium may trigger membrane trafficking and transport of viral ER-associated proteins to viroplasms, sites of viral genome replication. Induces and associates with structural rearrangements of intracellular membranes. Displays RNA-binding, nucleotide binding and NTPase activities. May play a role in virion morphogenesis and viral RNA encapsidation by interacting with the capsid protein VP3. Functionally, localizes the viral replication complex to the surface of membranous vesicles. Together with protein 3CD binds the Cis-Active RNA Element (CRE) which is involved in RNA synthesis initiation. Acts as a cofactor to stimulate the activity of 3D polymerase, maybe through a nucleid acid chaperone activity. In terms of biological role, localizes the viral replication complex to the surface of membranous vesicles. It inhibits host cell endoplasmic reticulum-to-Golgi apparatus transport and causes the disassembly of the Golgi complex, possibly through GBF1 interaction. This would result in depletion of MHC, trail receptors and IFN receptors at the host cell surface. Plays an essential role in viral RNA replication by recruiting ACBD3 and PI4KB at the viral replication sites, thereby allowing the formation of the rearranged membranous structures where viral replication takes place. Its function is as follows. Acts as a primer for viral RNA replication and remains covalently bound to viral genomic RNA. VPg is uridylylated prior to priming replication into VPg-pUpU. The oriI viral genomic sequence may act as a template for this. The VPg-pUpU is then used as primer on the genomic RNA poly(A) by the RNA-dependent RNA polymerase to replicate the viral genome. During genome replication, the VPg-RNA linkage is removed by the host TDP2, thereby accelerating replication. During the late stage of the replication cycle, host TDP2 is excluded from sites of viral RNA synthesis and encapsidation, allowing for the generation of progeny virions. Involved in the viral replication complex and viral polypeptide maturation. It exhibits protease activity with a specificity and catalytic efficiency that is different from protease 3C. Protein 3CD lacks polymerase activity. Protein 3CD binds to the 5'UTR of the viral genome. Functionally, major viral protease that mediates proteolytic processing of the polyprotein. Cleaves host EIF5B, contributing to host translation shutoff. Also cleaves host PABPC1, contributing to host translation shutoff. In terms of biological role, replicates the viral genomic RNA on the surface of intracellular membranes. May form linear arrays of subunits that propagate along a strong head-to-tail interaction called interface-I. Covalently attaches UMP to a tyrosine of VPg, which is used to prime RNA synthesis. The positive stranded RNA genome is first replicated at virus induced membranous vesicles, creating a dsRNA genomic replication form. This dsRNA is then used as template to synthesize positive stranded RNA genomes. ss(+)RNA genomes are either translated, replicated or encapsidated. This Homo sapiens (Human) protein is Genome polyprotein.